A 208-amino-acid polypeptide reads, in one-letter code: Large ribosomal subunit protein uL3 (208 aa).

Q149 bears the N5-methylglutamine mark.

This sequence belongs to the universal ribosomal protein uL3 family. As to quaternary structure, part of the 50S ribosomal subunit. Forms a cluster with proteins L14 and L19. Post-translationally, methylated by PrmB.

Its function is as follows. One of the primary rRNA binding proteins, it binds directly near the 3'-end of the 23S rRNA, where it nucleates assembly of the 50S subunit. This Actinobacillus pleuropneumoniae serotype 5b (strain L20) protein is Large ribosomal subunit protein uL3.